The following is a 174-amino-acid chain: Peptide deformylase (174 aa).

Fe cation-binding residues include cysteine 96 and histidine 138. Glutamate 139 is a catalytic residue. Histidine 142 serves as a coordination point for Fe cation.

Belongs to the polypeptide deformylase family. Requires Fe(2+) as cofactor.

The enzyme catalyses N-terminal N-formyl-L-methionyl-[peptide] + H2O = N-terminal L-methionyl-[peptide] + formate. In terms of biological role, removes the formyl group from the N-terminal Met of newly synthesized proteins. Requires at least a dipeptide for an efficient rate of reaction. N-terminal L-methionine is a prerequisite for activity but the enzyme has broad specificity at other positions. This chain is Peptide deformylase, found in Helicobacter pylori (strain P12).